We begin with the raw amino-acid sequence, 241 residues long: Uracil-DNA glycosylase (241 aa).

The Proton acceptor role is filled by Asp-68.

This sequence belongs to the uracil-DNA glycosylase (UDG) superfamily. UNG family.

It localises to the cytoplasm. The enzyme catalyses Hydrolyzes single-stranded DNA or mismatched double-stranded DNA and polynucleotides, releasing free uracil.. In terms of biological role, excises uracil residues from the DNA which can arise as a result of misincorporation of dUMP residues by DNA polymerase or due to deamination of cytosine. The polypeptide is Uracil-DNA glycosylase (Sinorhizobium medicae (strain WSM419) (Ensifer medicae)).